Consider the following 158-residue polypeptide: Rhombotin-2 (158 aa).

2 LIM zinc-binding domains span residues 30–89 (CGGC…RLFG) and 94–153 (CASC…EWTK).

As to quaternary structure, interacts via its LIM domains with ELF2 and LDB1. Interacts with BEX2 and KDM5A. Also interacts with basic helix-loop-helix protein TAL1/SCL and can assemble in a complex with LMO2 and TAL1/SCL.

The protein localises to the nucleus. In terms of biological role, acts with TAL1/SCL to regulate red blood cell development. Also acts with LDB1 to maintain erythroid precursors in an immature state. This Bos taurus (Bovine) protein is Rhombotin-2 (LMO2).